We begin with the raw amino-acid sequence, 2176 residues long: Nonribosomal peptide synthetase sirP (2176 aa).

Residues 16–31 (EGLTGDDHSPESRRDF) show a composition bias toward basic and acidic residues. Residues 16–38 (EGLTGDDHSPESRRDFPMSQSSG) form a disordered region. The tract at residues 51–434 (FERIASQFPE…LGRKDRVVKN (384 aa)) is adenylation 1. A Carrier 1 domain is found at 534-610 (SSPSSNLYVV…RICDTLSATI (77 aa)). Position 571 is an O-(pantetheine 4'-phosphoryl)serine (S571). The interval 643-1073 (YMTAIQVNMI…MMNQLEINDL (431 aa)) is condensation 1. Positions 1094–1474 (FEEVVDTWPD…GRIDNQVKVR (381 aa)) are adenylation 2. Positions 1570-1646 (PIEGTTERII…DLALAIDKHI (77 aa)) constitute a Carrier 2 domain. S1606 carries the O-(pantetheine 4'-phosphoryl)serine modification. A condensation 2 region spans residues 1661–2070 (QNTVLSHLEE…VQLMAAFRYL (410 aa)). In terms of domain architecture, Carrier 3 spans 2106–2176 (QEMIDLVREA…TAELIAGAVE (71 aa)). An O-(pantetheine 4'-phosphoryl)serine modification is found at S2140.

The protein belongs to the NRP synthetase family.

It participates in mycotoxin biosynthesis. Its function is as follows. Nonribosomal peptide synthetase; part of the gene cluster that mediates the biosynthesis of sirodesmin PL, an epipolythiodioxopiperazine (ETP) characterized by a disulfide bridged cyclic dipeptide and that acts as a phytotoxin which is involved in the blackleg didease of canola. SirD catalyzes the O-prenylation of L-tyrosine (L-Tyr) in the presence of dimethylallyl diphosphate (DMAPP) to yield 4-O-dimethylallyl-L-Tyr, and therefore represents probably the first pathway-specific enzyme in the biosynthesis of sirodesmin PL. 4-O-dimethylallyl-L-Tyr, then undergoes condensation with L-Ser in a reaction catalyzed by the non-ribosomal peptide synthase sirP to form the diketopiperazine (DKP) backbone. Further bishydroxylation of the DKP performed by the cytochrome P450 monooxygenase sirC leads to the production of the intermediate phomamide. This step is essential to form the reactive thiol group required for toxicity of sirodesmin PL. The next steps of sirodesmin biosynthesis are not well understood yet, but some predictions could be made from intermediate compounds identification. Phomamide is converted into phomalizarine via oxidation, probably by sirT. Further oxidation, methylation (by sirM or sirN) and reduction steps convert phomalizarine to deacetyl sirodesmin. Finally, acetyltransferase sirH probably acetylates deacetyl sirodesmin to produce sirodesmin PL. The sequence is that of Nonribosomal peptide synthetase sirP from Leptosphaeria maculans (Blackleg fungus).